The sequence spans 661 residues: MFSIIFSNPVKPFNSVIIHQIRFFSRDPFPNKVQHYLYRANLIDSIRLSLRSPTTSDRTLASLLNHRLLDSFVVKNALRSSPSVSSAWSIFKTLSHKSPRFSFETETLHAFATVLAKFQRSSELNSLIGVVNAWKFRNVHFSFMNLLNLYATAGDFDSVLKTWDEYRCSGEEKKGCTESYNIVMQVYMTLGKDSEAVQTFDQIINEGGIPNSRTFTIMIEHLVKLGNLDAAMKIFETLPLMRITRTLKHYSVLVEAFVDAQRFDEVKTLIAEMKSDGKFPSRRMLEPLKRMREAGFEHETEEFLREMLPDERIKDISMYSMDNPSDSEDEGDEYKDDVNEAQVKLKPWLDPKALATSLKKWSSDAVTALEEANFVWTNLLVCKMLRNFRAPETAWSFFCWVAIQPGFTHDAYTIERMMAMLARNGQVELVDKLISKVRIEGIKLPFSTIRLIIDLYGISKKPEAAIKVFNEDRTLCGSISDFNLMLLYSSLLRTLTKCKRNAEALETLEDMMLTGVSPDIQTFSGLMYHFALQGEIQTVERLFSMVRQIGLEPDPYMLKLLVQAYCRCERSVLAYRVFQDMKDSNLMPDRETKELLVKSLWREEKRKEAAAVEESYEEENDNKNSSNVLRLALKGHVWTISSTDISRVYNLYRDCVLKTST.

PPR repeat units lie at residues Val139 to Lys173, Cys176 to Pro210, Asn211 to Arg245, Thr246 to Pro280, Asp410 to Leu444, Pro445 to Leu475, Leu484 to Pro518, Asp519 to Pro553, and Asp554 to Pro588.

The protein belongs to the PPR family. P subfamily.

In Arabidopsis thaliana (Mouse-ear cress), this protein is Pentatricopeptide repeat-containing protein At5g66631.